Consider the following 270-residue polypeptide: Phosphoribosylformylglycinamidine synthase subunit PurQ (270 aa).

Residues 5 to 251 (ALVLHATGTN…VIRERDSEEE (247 aa)) form the Glutamine amidotransferase type-1 domain. Cys-95 acts as the Nucleophile in catalysis. Active-site residues include His-236 and Glu-238.

Part of the FGAM synthase complex composed of 1 PurL, 1 PurQ and 2 PurS subunits.

Its subcellular location is the cytoplasm. It carries out the reaction N(2)-formyl-N(1)-(5-phospho-beta-D-ribosyl)glycinamide + L-glutamine + ATP + H2O = 2-formamido-N(1)-(5-O-phospho-beta-D-ribosyl)acetamidine + L-glutamate + ADP + phosphate + H(+). The enzyme catalyses L-glutamine + H2O = L-glutamate + NH4(+). It functions in the pathway purine metabolism; IMP biosynthesis via de novo pathway; 5-amino-1-(5-phospho-D-ribosyl)imidazole from N(2)-formyl-N(1)-(5-phospho-D-ribosyl)glycinamide: step 1/2. In terms of biological role, part of the phosphoribosylformylglycinamidine synthase complex involved in the purines biosynthetic pathway. Catalyzes the ATP-dependent conversion of formylglycinamide ribonucleotide (FGAR) and glutamine to yield formylglycinamidine ribonucleotide (FGAM) and glutamate. The FGAM synthase complex is composed of three subunits. PurQ produces an ammonia molecule by converting glutamine to glutamate. PurL transfers the ammonia molecule to FGAR to form FGAM in an ATP-dependent manner. PurS interacts with PurQ and PurL and is thought to assist in the transfer of the ammonia molecule from PurQ to PurL. The chain is Phosphoribosylformylglycinamidine synthase subunit PurQ from Treponema denticola (strain ATCC 35405 / DSM 14222 / CIP 103919 / JCM 8153 / KCTC 15104).